The following is a 188-amino-acid chain: Elongation factor P (188 aa).

It belongs to the elongation factor P family.

It is found in the cytoplasm. The protein operates within protein biosynthesis; polypeptide chain elongation. Its function is as follows. Involved in peptide bond synthesis. Stimulates efficient translation and peptide-bond synthesis on native or reconstituted 70S ribosomes in vitro. Probably functions indirectly by altering the affinity of the ribosome for aminoacyl-tRNA, thus increasing their reactivity as acceptors for peptidyl transferase. The sequence is that of Elongation factor P from Wolbachia pipientis wMel.